A 273-amino-acid polypeptide reads, in one-letter code: Dormancy associated translation inhibitor (273 aa).

As to quaternary structure, interacts with human TLR2.

Involved in translation regulation. Can also stimulate macrophages and peripheral blood mononuclear cells (PBMC) to secrete important cytokines that may be significant in granuloma formation and its maintenance. Increases secretion of IFN-gamma, TNF-alpha, IL-1 beta and IL-8 through human Toll-like receptor 2 (TLR2) signaling pathway. This is Dormancy associated translation inhibitor from Mycobacterium tuberculosis (strain CDC 1551 / Oshkosh).